Consider the following 583-residue polypeptide: MENTTDPENIPVSKPKYPTIRRILSQTFRILLLFSITTAYVLGYQALCHQGLLITFGLYGAAMLLHLLMQGIFANLEIRRIEKRDGVCSFKKTVALTITGYQENPDYLRQCLESCKGMKYPKDKLKIILVIDGNNEEDVYMMEIFKEVFHGEDVGTYVWQENYHTWNIPSEESEDSSSEISSFPWKNEGIQMVEELVRTKRCVCIMQQWGGKREVMYTAFRALGTSVDFILVCNSDIKLDKMATVELVKVLEDDDKNGAVGGDVRVWNRHDSFISFMSSLRYWMVFNMEIACQSYFDSVTYIRGSLGMYRNDILQAFLEFWYNKTFLGTRCPIGDDRFLTNRVLSMGYRTKYSHKSCAYAPCQYLRWLNQQTPWARSYFRMWFCNAQWWHQHHIWMTYESATGIFFPFFVTAVLIRLMYSSSLCNIVWLFLCIQIMSLLLSLYASWQSKKLSMVLMSLYSTLYIIWLLPCQLVALLTIAKSDWGTSGRKKVVNNYVPLFSLSIWAAVLLGGLCYSMYIGCRKDWSKPQANRELYHLLYGCAGYMAYWVLMTVIYCVSGSCCKMRSQAVPQTHDITSLSVSLLV.

Over 1–29 the chain is Cytoplasmic; sequence MENTTDPENIPVSKPKYPTIRRILSQTFR. Residues 30–50 form a helical membrane-spanning segment; sequence ILLLFSITTAYVLGYQALCHQ. The Extracellular portion of the chain corresponds to 51 to 52; the sequence is GL. Residues 53–73 traverse the membrane as a helical segment; sequence LITFGLYGAAMLLHLLMQGIF. Residues 74 to 393 lie on the Cytoplasmic side of the membrane; the sequence is ANLEIRRIEK…CNAQWWHQHH (320 aa). The helical transmembrane segment at 394 to 414 threads the bilayer; it reads IWMTYESATGIFFPFFVTAVL. The Extracellular portion of the chain corresponds to 415–425; it reads IRLMYSSSLCN. A helical transmembrane segment spans residues 426 to 446; that stretch reads IVWLFLCIQIMSLLLSLYASW. Residues 447 to 457 lie on the Cytoplasmic side of the membrane; that stretch reads QSKKLSMVLMS. Residues 458–478 form a helical membrane-spanning segment; the sequence is LYSTLYIIWLLPCQLVALLTI. At 479–497 the chain is on the extracellular side; the sequence is AKSDWGTSGRKKVVNNYVP. A helical membrane pass occupies residues 498-518; it reads LFSLSIWAAVLLGGLCYSMYI. Over 519-535 the chain is Cytoplasmic; sequence GCRKDWSKPQANRELYH. Residues 536 to 556 form a helical membrane-spanning segment; it reads LLYGCAGYMAYWVLMTVIYCV. Residues 557–583 are Extracellular-facing; the sequence is SGSCCKMRSQAVPQTHDITSLSVSLLV.

This sequence belongs to the NodC/HAS family.

Its subcellular location is the membrane. This chain is Hyaluronan synthase-related protein (has-rs), found in Xenopus laevis (African clawed frog).